The primary structure comprises 407 residues: MSNAVKKTGVKKVVLAYSGGLDTSAIIPWLKETYDDCEIIAFCADVGQGEEELVGLTEKALASGASECHIVDLKEEFVADYIYPTIATGAIYEGTYLLGTSMARPIIAKAQVEVARKVGADAVCHGCTGKGNDQVRFEGCFAALAPDLKVIAPWREWEMRSREDLLAYLAERDIKTSASATKIYSRDANAWHISHEGGELEDPWNEPSKGVWTLTVAPEDAPNEPEYVSLAVKHGRVTHVNDEALSPYAALMKLNDIAGKHGVGRIDITENRLVGMKSRGCYETPGGTVMFAGLRAIEELVLDKTSRTWREQIAGQMSHLVYDGRWFTPLCKSLIAASESLAESVNGDVVIKLYKGQATAVKKRSPNSLYSESFATFGEDDVYDQKHAEGFIRLYSLASRIRALNTK.

ATP is bound by residues 16–24 (AYSGGLDTS) and Ala-44. 2 residues coordinate L-citrulline: Tyr-96 and Ser-101. Gly-126 is an ATP binding site. L-aspartate-binding residues include Thr-128, Asn-132, and Asp-133. Position 132 (Asn-132) interacts with L-citrulline. L-citrulline contacts are provided by Arg-136, Ser-185, Ser-194, Glu-270, and Tyr-282.

This sequence belongs to the argininosuccinate synthase family. Type 1 subfamily. In terms of assembly, homotetramer.

It localises to the cytoplasm. The enzyme catalyses L-citrulline + L-aspartate + ATP = 2-(N(omega)-L-arginino)succinate + AMP + diphosphate + H(+). The protein operates within amino-acid biosynthesis; L-arginine biosynthesis; L-arginine from L-ornithine and carbamoyl phosphate: step 2/3. The chain is Argininosuccinate synthase from Shewanella frigidimarina (strain NCIMB 400).